We begin with the raw amino-acid sequence, 294 residues long: ATP phosphoribosyltransferase (294 aa).

It belongs to the ATP phosphoribosyltransferase family. Long subfamily. The cofactor is Mg(2+).

It localises to the cytoplasm. It carries out the reaction 1-(5-phospho-beta-D-ribosyl)-ATP + diphosphate = 5-phospho-alpha-D-ribose 1-diphosphate + ATP. The protein operates within amino-acid biosynthesis; L-histidine biosynthesis; L-histidine from 5-phospho-alpha-D-ribose 1-diphosphate: step 1/9. Its activity is regulated as follows. Feedback inhibited by histidine. In terms of biological role, catalyzes the condensation of ATP and 5-phosphoribose 1-diphosphate to form N'-(5'-phosphoribosyl)-ATP (PR-ATP). Has a crucial role in the pathway because the rate of histidine biosynthesis seems to be controlled primarily by regulation of HisG enzymatic activity. The chain is ATP phosphoribosyltransferase from Pelodictyon phaeoclathratiforme (strain DSM 5477 / BU-1).